The following is a 78-amino-acid chain: Large ribosomal subunit protein bL31 (78 aa).

4 residues coordinate Zn(2+): C16, C18, C38, and C41.

This sequence belongs to the bacterial ribosomal protein bL31 family. Type A subfamily. Part of the 50S ribosomal subunit. Zn(2+) is required as a cofactor.

Its function is as follows. Binds the 23S rRNA. This Frankia casuarinae (strain DSM 45818 / CECT 9043 / HFP020203 / CcI3) protein is Large ribosomal subunit protein bL31.